The following is a 490-amino-acid chain: MDLLVDELFADMDADGASPPPPRPAGGPKNTPAAPPLYATGRLSQAQLMPSPPMPVPPAALFNRLLDDLGFSAGPALCTMLDTWNEDLFSALPTNADLYRECKFLSTLPSDVVEWGDAYVPERAQIDIRAHGDVAFPTLPATRDGLGLYYEALSRFFHAELRAREESYRTVLANFCSALYRYLRASVRQLHRQAHMRGRDRDLGEMLRATIADRYYRETARLARVLFLHLYLFLTREILWAAYAEQMMRPDLFDCLCCDLESWRQLAGLFQPFMFVNGALTVRGVPIEARRLRELNHIREHLNLPLVRSAATEEPGAPLTTPPTLHGNQARASGYFMVLIRAKLDSYSSFTTSPSEAVMREHAYSRARTKNNYGSTIEGLLDLPDDDAPEEAGLAAPRLSFLPAGHTRRLSTAPPTDVSLGDELHLDGEDVAMAHADALDDFDLDMLGDGDSPGPGFTPHDSAPYGALDMADFEFEQMFTDALGIDEYGG.

The interval M12–L37 is disordered. S18, S353, S411, and S452 each carry phosphoserine. The segment at S411–G490 is transcriptional activation.

It belongs to the herpesviridae tegument protein VP16 protein family. As to quaternary structure, interacts with VP22. Interacts with gH (via C-terminus). Interacts with the virion host shutoff protein (vhs). Interacts with VP11/12. Associates with the VP16-induced complex; binding to host HCFC1 activates VP16 for association with the octamer motif-binding host protein POU2F1, to form a multiprotein-DNA complex responsible for activating transcription of the viral immediate early genes.

It localises to the virion tegument. It is found in the host nucleus. In terms of biological role, transcriptional activator of immediate-early (IE) gene products (alpha genes). Acts as a key activator of lytic infection by initiating the lytic program through the assembly of the transcriptional regulatory VP16-induced complex composed of VP16 and two cellular factors, HCFC1 and POU2F 1. VP16-induced complex represents a regulatory switch: when it is on, it promotes IE-gene expression and thus lytic infection, and when it is off, it limits IE-gene transcription favoring latent infection. May play a role in the aggregation of tegument proteins around nucleocapsids during virus morphogenesis. The chain is Tegument protein VP16 from Homo sapiens (Human).